We begin with the raw amino-acid sequence, 87 residues long: UPF0250 protein BCc_307 (87 aa).

This sequence belongs to the UPF0250 family.

This is UPF0250 protein BCc_307 from Buchnera aphidicola subsp. Cinara cedri (strain Cc).